The chain runs to 430 residues: MATLSVKPSQRFQLPDWHTNSYLLSTNAQLQRDASHQIRQEARVLRNETNNQTIWDEHDNRTRLVERIDTVNRWKEMLDKCLTDLDAEIDALTQMKDSAGQNLQAKNLPLDVAIECLTLRESRRDIDVVKDPVEDELHKEVEVIEATKKALQQKVSQAFEHLCLLQEVRQQLNSDHRGKMETLEIDRGCLSLNLRSPNISLKVDPTRVPDGSTTLQQWDDFSQFNKDRGEAEMKAATELREAIALTIAETNNELEAQRVATEFAFRKRLREMEKVYSELKWQEKNTLEEIAELQEDIRHLEEDLRTKFLSLKLSHTRLEARTYRPNVELCRDQAQYGLTDEVHQLEATIAALKQKLAQAQDALDALYKHLARLQADIACKANSMLLDTKCMDTRRKLTVPAEKFVPEVDTFTRTTNSTLSPLKSCQLELA.

Coiled-coil stretches lie at residues 82–160 (LTDL…QAFE) and 273–379 (EKVY…DIAC).

It belongs to the tektin family. In terms of assembly, microtubule inner protein component of sperm flagellar doublet microtubules. May interact with CCDC172. In terms of processing, tyrosine phosphorylated. Ubiquitinated, leading to its degradation. Deubiquitinated by USP16, promoting its stability.

Its subcellular location is the cytoplasm. It localises to the cytoskeleton. The protein resides in the cilium axoneme. The protein localises to the flagellum axoneme. It is found in the microtubule organizing center. Microtubule inner protein (MIP) part of the dynein-decorated doublet microtubules (DMTs) in cilia and flagellar axoneme. Plays a key role in the assembly or attachment of the inner dynein arm to microtubules in sperm flagella and tracheal cilia. Forms filamentous polymers in the walls of ciliary and flagellar microtubules. This is Tektin-2 (TEKT2) from Macaca fascicularis (Crab-eating macaque).